The following is a 391-amino-acid chain: Elongation factor Tu (391 aa).

The tr-type G domain maps to lysine 10 to glutamate 201. Positions glycine 19–threonine 26 are G1. Glycine 19 to threonine 26 provides a ligand contact to GTP. Threonine 26 provides a ligand contact to Mg(2+). A G2 region spans residues glycine 55–serine 59. The tract at residues aspartate 76–glycine 79 is G3. GTP-binding positions include aspartate 76–histidine 80 and asparagine 131–aspartate 134. The G4 stretch occupies residues asparagine 131–aspartate 134. Positions serine 169–leucine 171 are G5.

It belongs to the TRAFAC class translation factor GTPase superfamily. Classic translation factor GTPase family. EF-Tu/EF-1A subfamily. As to quaternary structure, monomer.

It localises to the cytoplasm. It carries out the reaction GTP + H2O = GDP + phosphate + H(+). In terms of biological role, GTP hydrolase that promotes the GTP-dependent binding of aminoacyl-tRNA to the A-site of ribosomes during protein biosynthesis. This is Elongation factor Tu from Chelativorans sp. (strain BNC1).